An 810-amino-acid chain; its full sequence is Zinc finger CCCH domain-containing protein 11A (810 aa).

3 C3H1-type zinc fingers span residues Pro2–Ala29, Ile31–Ile57, and Lys60–Arg86. Ser108 carries the phosphoserine modification. Glycyl lysine isopeptide (Lys-Gly) (interchain with G-Cter in SUMO2) cross-links involve residues Lys114 and Lys124. Residue Ser132 is modified to Phosphoserine. Disordered regions lie at residues Met139–Val194, Lys223–Arg258, Gly285–Asn351, and Glu367–Ile432. Lys140 is covalently cross-linked (Glycyl lysine isopeptide (Lys-Gly) (interchain with G-Cter in SUMO2)). Phosphoserine occurs at positions 149 and 171. Residues Ala160 to Asp175 show a composition bias toward acidic residues. Ser290 bears the Phosphoserine mark. Basic and acidic residues-rich tracts occupy residues Lys309–Pro322 and Glu367–Asp390. Thr321 carries the phosphothreonine modification. Positions Glu362 to Gln423 form a coiled coil. Ser370 is modified (phosphoserine). Positions Ser391–Arg402 are enriched in polar residues. The span at Gln417–Ile432 shows a compositional bias: basic and acidic residues. Lys478 participates in a covalent cross-link: Glycyl lysine isopeptide (Lys-Gly) (interchain with G-Cter in SUMO2). The tract at residues Ala482 to Val549 is disordered. The span at Gln486 to Gln498 shows a compositional bias: low complexity. Lys619 participates in a covalent cross-link: Glycyl lysine isopeptide (Lys-Gly) (interchain with G-Cter in SUMO2). The segment at Thr715–Ser768 is disordered. Over residues Pro729 to Ser748 the composition is skewed to low complexity. The span at Gln749–Thr762 shows a compositional bias: polar residues.

As to quaternary structure, interacts with TREX complex components THOC2, DDX39 and POLDIP3; the interactions are ATP-dependent. Interacts with PABPN1; this interaction retains ZC3H11A in nuclear speckles. Interacts with KPNA3.

It localises to the nucleus. The protein resides in the nucleus speckle. Its function is as follows. Through its association with TREX complex components, may participate in the export and post-transcriptional coordination of selected mRNA transcripts, including those required to maintain the metabolic processes in embryonic cells. Binds RNA. Functionally, (Microbial infection) Plays a role in efficient growth of several nuclear-replicating viruses such as HIV-1, influenza virus or herpes simplex virus 1/HHV-1. Required for efficient viral mRNA export. May be required for proper polyadenylation of adenovirus type 5/HAdV-5 capsid mRNA. In Homo sapiens (Human), this protein is Zinc finger CCCH domain-containing protein 11A (ZC3H11A).